The following is a 156-amino-acid chain: Transcriptional repressor NrdR (156 aa).

Residues 3–34 (CPKCSSTHSRVVDSRHADDANAIRRRRECENC) fold into a zinc finger. Positions 49–139 (LIVVKKDGTR…VYKEFKDVDQ (91 aa)) constitute an ATP-cone domain.

It belongs to the NrdR family. The cofactor is Zn(2+).

In terms of biological role, negatively regulates transcription of bacterial ribonucleotide reductase nrd genes and operons by binding to NrdR-boxes. The chain is Transcriptional repressor NrdR from Staphylococcus haemolyticus (strain JCSC1435).